The primary structure comprises 157 residues: UPF0225 protein PA14_50900 (157 aa).

The protein belongs to the UPF0225 family.

In Pseudomonas aeruginosa (strain UCBPP-PA14), this protein is UPF0225 protein PA14_50900.